The sequence spans 1001 residues: Ankyrin repeat domain-containing protein 35 (1001 aa).

6 ANK repeats span residues 53-82, 86-115, 119-148, 152-181, 185-214, and 218-247; these read NGQSPFHLAASKGLTECLTILLANGADINS, DGSTALHLATISCQPQCVKVLLQHGANEDA, ENRSPLHWAASSGCASSVLLLCDHEAFLDV, DGRTPLMIASLGGHAAICSQLLQRGARVNV, NDKSALILACEKGSAEVAELLLSHGADAGA, and TGHDALHYALHTQDKALWRHLQQALSRRRR. Disordered regions lie at residues 256-296, 352-482, and 559-601; these read PDLA…PCSE, PRAS…VAEP, and PEVP…ALGG. The segment covering 281–295 has biased composition (acidic residues); sequence PEEEQEEKEDEDPCS. Residues 295–344 are a coiled coil; sequence SEEWRWKYEEERRKVVRLEQELVQKTEECKTQAAAYLDLENQIREQAQEL. The span at 402–422 shows a compositional bias: basic and acidic residues; that stretch reads KKAEDSAPGKIQYEVHGRSQP. A compositionally biased stretch (low complexity) spans 423–434; it reads EEQGPPQSPASE. A compositionally biased stretch (polar residues) spans 440–450; that stretch reads TGQQLTTNGAQ. The segment covering 579-588 has biased composition (basic and acidic residues); it reads KQDEEKEKRV. Coiled coils occupy residues 610 to 696, 733 to 810, and 851 to 968; these read KGQL…LLAS, ISTL…IGKL, and QELK…HEEI. Positions 879 to 902 are disordered; it reads RRSGDLAAQAAEQERQASEMRGRS. A compositionally biased stretch (basic and acidic residues) spans 890–902; that stretch reads EQERQASEMRGRS.

The polypeptide is Ankyrin repeat domain-containing protein 35 (ANKRD35) (Homo sapiens (Human)).